The primary structure comprises 209 residues: tRNA (guanine-N(7)-)-methyltransferase (209 aa).

Positions 40, 65, and 114 each coordinate S-adenosyl-L-methionine. D114 is an active-site residue. Substrate contacts are provided by residues D150 and 188–191; that span reads TAFE.

Belongs to the class I-like SAM-binding methyltransferase superfamily. TrmB family.

It carries out the reaction guanosine(46) in tRNA + S-adenosyl-L-methionine = N(7)-methylguanosine(46) in tRNA + S-adenosyl-L-homocysteine. Its pathway is tRNA modification; N(7)-methylguanine-tRNA biosynthesis. In terms of biological role, catalyzes the formation of N(7)-methylguanine at position 46 (m7G46) in tRNA. This Bdellovibrio bacteriovorus (strain ATCC 15356 / DSM 50701 / NCIMB 9529 / HD100) protein is tRNA (guanine-N(7)-)-methyltransferase.